Reading from the N-terminus, the 793-residue chain is Ent-copalyl diphosphate synthase, chloroplastic (793 aa).

A chloroplast-targeting transit peptide spans 1–47 (MPLASNPVAFLPSSTAHGDLPAAAFSRSSAGCLQLCRPLTPTSSLQC). The Mg(2+) site is built by aspartate 372 and aspartate 374. The DXDD motif signature appears at 372–375 (DIDD).

This sequence belongs to the terpene synthase family. Requires Mg(2+) as cofactor.

The protein resides in the plastid. Its subcellular location is the chloroplast. The enzyme catalyses (2E,6E,10E)-geranylgeranyl diphosphate = ent-copalyl diphosphate. Its pathway is plant hormone biosynthesis; gibberellin biosynthesis. Functionally, catalyzes the conversion of geranylgeranyl diphosphate (GGPP) to the gibberellin precursor ent-copalyl diphosphate (CPP). The chain is Ent-copalyl diphosphate synthase, chloroplastic from Salvia miltiorrhiza (Chinese sage).